The following is a 90-amino-acid chain: Defensin-like protein 193 (90 aa).

The first 27 residues, Met1–Ala27, serve as a signal peptide directing secretion. 4 cysteine pairs are disulfide-bonded: Cys32–Cys86, Cys45–Cys69, Cys54–Cys81, and Cys58–Cys83.

This sequence belongs to the DEFL family. Protease inhibitor I18 (RTI/MTI-2) subfamily.

The protein resides in the secreted. This is Defensin-like protein 193 (ATTI2) from Arabidopsis thaliana (Mouse-ear cress).